The sequence spans 256 residues: uncharacterized protein (256 aa).

The next 4 membrane-spanning stretches (helical) occupy residues 5–25 (FIEGFETIWTVVRAVVLNYLL), 30–50 (ILSTILYVSAVISWNVSLKVF), 64–84 (VVIFILRIVSLFLWILADPAI), and 105–125 (VGITLYPLYVLLSWAVFLGII). The interval 198–256 (EKTKSLDSISHSSSSSRKSSTELKIPPVETRIVAEIPVPSSVKRRRHRPNKSMGSIKNS) is disordered. Low complexity predominate over residues 203–215 (LDSISHSSSSSRK). Phosphoserine is present on residues S210 and S211.

The protein localises to the endoplasmic reticulum membrane. The protein resides in the nucleus membrane. This is an uncharacterized protein from Schizosaccharomyces pombe (strain 972 / ATCC 24843) (Fission yeast).